We begin with the raw amino-acid sequence, 267 residues long: Mediator of RNA polymerase II transcription subunit 18 (267 aa).

The protein belongs to the Mediator complex subunit 18 family. In terms of assembly, component of the Mediator complex.

The protein localises to the nucleus. Its function is as follows. Component of the Mediator complex, a coactivator involved in the regulated transcription of nearly all RNA polymerase II-dependent genes. Mediator functions as a bridge to convey information from gene-specific regulatory proteins to the basal RNA polymerase II transcription machinery. Mediator is recruited to promoters by direct interactions with regulatory proteins and serves as a scaffold for the assembly of a functional preinitiation complex with RNA polymerase II and the general transcription factors. This Coccidioides immitis (strain RS) (Valley fever fungus) protein is Mediator of RNA polymerase II transcription subunit 18 (SRB5).